Consider the following 970-residue polypeptide: Toxin subunit YenC2 (970 aa).

9 RHS repeats span residues 168 to 182, 297 to 311, 329 to 343, 361 to 375, 408 to 422, 500 to 514, 580 to 594, 606 to 620, and 640 to 654; these read AGQC…GLIQ, GVVT…TQRL, LQDL…GNVL, VPEN…YQLV, NYTR…GNLM, DDSE…SQRI, NDQI…TCSS, SMEE…AVWA, and DATG…YYQP. Positions 610 to 690 are RHS-repeat associated core domain; that stretch reads YYPYGGTAVW…PLRLTDPDGM (81 aa). Residues 849 to 950 are deaminase domain; sequence TEAFITGIRS…YNCSGIISGL (102 aa).

This sequence belongs to the RHS family. As to quaternary structure, semipurified toxin complex consists of at least YenA1-YenA2-YenB-YenC1-YenC2-Chi1-Chi2. YenB and the N-terminus of YenC2 form a large hollow shell of beta-strands. The shell is closed at both ends, within which the C-terminus of YenC2 is probably found. The C-terminal region dissociates from the YenB-YenC2 complex at pH 4.5 but not 7.5. The Yen-TC:K9 subcomplex is about 26 nm tall and 22 nm in diameter with 5-fold symmetry and 5 copies of YenA1, YenA2, Chi1 and Chi2; the chitinase subunits may be solvent accessible on the exterior the complex. The Yen-TC:K9 subcomplex has no insecticidal activity. The native complex with additional YenB, YenC1 and YenC2 subunits is 16 nm taller and is insecticidal; the toxicity-conferring subunits are present at about 1 copy each.

It localises to the secreted. Its activity is regulated as follows. Toxin complex is secreted when grown at 25 degrees Celsius or less; at higher temperatures the proteins are present intracellularly but not secreted. Functionally, part of an orally active toxin complex (TC) with strong insecticidal effects on larvae of the Coleoptera Costelytra zealandica, Acrossidius tasmania and Adoryphorus couloni and some Lepidoptera larvae. The TC has an endochitinase activity. This chain is Toxin subunit YenC2, found in Yersinia entomophaga.